The sequence spans 376 residues: Protein-glutamate methylesterase/protein-glutamine glutaminase (376 aa).

Residues Lys-4–Leu-121 form the Response regulatory domain. 4-aspartylphosphate is present on Asp-55. The segment at Ser-142 to Ser-161 is disordered. Low complexity predominate over residues Ser-145–Ser-161. The CheB-type methylesterase domain maps to Thr-183–Lys-376. Active-site residues include Ser-195, His-222, and Asp-318.

Belongs to the CheB family. In terms of processing, phosphorylated by CheA. Phosphorylation of the N-terminal regulatory domain activates the methylesterase activity.

The protein localises to the cytoplasm. It carries out the reaction [protein]-L-glutamate 5-O-methyl ester + H2O = L-glutamyl-[protein] + methanol + H(+). The catalysed reaction is L-glutaminyl-[protein] + H2O = L-glutamyl-[protein] + NH4(+). In terms of biological role, involved in chemotaxis. Part of a chemotaxis signal transduction system that modulates chemotaxis in response to various stimuli. Catalyzes the demethylation of specific methylglutamate residues introduced into the chemoreceptors (methyl-accepting chemotaxis proteins or MCP) by CheR. Also mediates the irreversible deamidation of specific glutamine residues to glutamic acid. The polypeptide is Protein-glutamate methylesterase/protein-glutamine glutaminase (Aliivibrio fischeri (strain ATCC 700601 / ES114) (Vibrio fischeri)).